We begin with the raw amino-acid sequence, 291 residues long: HTH-type transcriptional activator AmpR (291 aa).

The region spanning 6–63 (LPLNSLRAFEAAARHLSFTHAAIELNVTHSAISQHVKTLEQHLNCQLFVRVSRGLMLT) is the HTH lysR-type domain. Positions 23–42 (FTHAAIELNVTHSAISQHVK) form a DNA-binding region, H-T-H motif.

Belongs to the LysR transcriptional regulatory family.

It is found in the cytoplasm. Its function is as follows. This protein is a positive regulator of gene expression of cephalosporinase (AmpC). The sequence is that of HTH-type transcriptional activator AmpR (ampR) from Enterobacter cloacae.